Here is a 189-residue protein sequence, read N- to C-terminus: Elongation factor P (189 aa).

At Lys34 the chain carries N6-(3,6-diaminohexanoyl)-5-hydroxylysine.

The protein belongs to the elongation factor P family. In terms of processing, may be beta-lysylated on the epsilon-amino group of Lys-34 by the combined action of EpmA and EpmB, and then hydroxylated on the C5 position of the same residue by EpmC (if this protein is present). Lysylation is critical for the stimulatory effect of EF-P on peptide-bond formation. The lysylation moiety may extend toward the peptidyltransferase center and stabilize the terminal 3-CCA end of the tRNA. Hydroxylation of the C5 position on Lys-34 may allow additional potential stabilizing hydrogen-bond interactions with the P-tRNA.

It is found in the cytoplasm. Its pathway is protein biosynthesis; polypeptide chain elongation. Involved in peptide bond synthesis. Alleviates ribosome stalling that occurs when 3 or more consecutive Pro residues or the sequence PPG is present in a protein, possibly by augmenting the peptidyl transferase activity of the ribosome. Modification of Lys-34 is required for alleviation. The sequence is that of Elongation factor P from Alcanivorax borkumensis (strain ATCC 700651 / DSM 11573 / NCIMB 13689 / SK2).